Here is a 388-residue protein sequence, read N- to C-terminus: Succinate--CoA ligase [ADP-forming] subunit beta (388 aa).

An ATP-grasp domain is found at 9–245 (KALLKEYGMP…KSQENERELK (237 aa)). ATP is bound by residues lysine 46, 53-55 (GRG), glutamate 100, tyrosine 103, and glutamate 108. Mg(2+) is bound by residues asparagine 200 and aspartate 214. Residues asparagine 265 and 322 to 324 (GIV) each bind substrate.

The protein belongs to the succinate/malate CoA ligase beta subunit family. As to quaternary structure, heterotetramer of two alpha and two beta subunits. The cofactor is Mg(2+).

The catalysed reaction is succinate + ATP + CoA = succinyl-CoA + ADP + phosphate. It catalyses the reaction GTP + succinate + CoA = succinyl-CoA + GDP + phosphate. Its pathway is carbohydrate metabolism; tricarboxylic acid cycle; succinate from succinyl-CoA (ligase route): step 1/1. Functionally, succinyl-CoA synthetase functions in the citric acid cycle (TCA), coupling the hydrolysis of succinyl-CoA to the synthesis of either ATP or GTP and thus represents the only step of substrate-level phosphorylation in the TCA. The beta subunit provides nucleotide specificity of the enzyme and binds the substrate succinate, while the binding sites for coenzyme A and phosphate are found in the alpha subunit. This Acinetobacter baumannii (strain SDF) protein is Succinate--CoA ligase [ADP-forming] subunit beta.